Consider the following 340-residue polypeptide: Fructose-1,6-bisphosphatase class 1 (340 aa).

4 residues coordinate Mg(2+): glutamate 107, aspartate 126, leucine 128, and aspartate 129. Asparagine 215 lines the substrate pocket. A Mg(2+)-binding site is contributed by glutamate 287.

It belongs to the FBPase class 1 family. Homotetramer. Requires Mg(2+) as cofactor.

The protein resides in the cytoplasm. It catalyses the reaction beta-D-fructose 1,6-bisphosphate + H2O = beta-D-fructose 6-phosphate + phosphate. It participates in carbohydrate biosynthesis; gluconeogenesis. This is Fructose-1,6-bisphosphatase class 1 from Brucella suis (strain ATCC 23445 / NCTC 10510).